Reading from the N-terminus, the 408-residue chain is Multidrug resistance protein MdtG (408 aa).

Helical transmembrane passes span 16–36 (LIVA…VMPF), 58–78 (IVFS…GGLA), 92–112 (LGMG…QFLI), 115–135 (ALLG…ATQV), 146–166 (TLST…GLLA), 173–193 (PVFF…LFCI), 224–244 (LFVT…ILTL), 256–276 (VAFI…LSAP), 290–310 (ILIT…YVQT), 319–339 (FLLG…LVYN), and 378–398 (AVFL…WNSL).

This sequence belongs to the major facilitator superfamily. DHA1 family. MdtG (TC 2.A.1.2.20) subfamily.

The protein resides in the cell inner membrane. Functionally, confers resistance to fosfomycin and deoxycholate. This Escherichia coli O127:H6 (strain E2348/69 / EPEC) protein is Multidrug resistance protein MdtG.